A 342-amino-acid chain; its full sequence is Foldase protein PrsA (342 aa).

Positions 1-20 (MKKKLILAAAGAMAVFSLAA) are cleaved as a signal peptide. A lipid anchor (N-palmitoyl cysteine) is attached at cysteine 21. Cysteine 21 carries the S-diacylglycerol cysteine lipid modification. The region spanning 142–235 (HPEVEAQIIQ…QTYQTTYYVV (94 aa)) is the PpiC domain. The interval 297 to 342 (MQTESSSASSEKKESKSSDSKTSDTKTSDSEKATDSSSKTTESSSK) is disordered. Basic and acidic residues predominate over residues 306 to 330 (SEKKESKSSDSKTSDTKTSDSEKAT). The segment covering 331 to 342 (DSSSKTTESSSK) has biased composition (low complexity).

The protein belongs to the PrsA family.

It localises to the cell membrane. It catalyses the reaction [protein]-peptidylproline (omega=180) = [protein]-peptidylproline (omega=0). Its function is as follows. Plays a major role in protein secretion by helping the post-translocational extracellular folding of several secreted proteins. In Enterococcus faecalis (strain ATCC 700802 / V583), this protein is Foldase protein PrsA.